The chain runs to 153 residues: Nucleoside diphosphate kinase 3 (153 aa).

Residues K11, F59, R87, T93, R104, and N114 each contribute to the ATP site. The active-site Pros-phosphohistidine intermediate is H117.

Belongs to the NDK family. In terms of assembly, homohexamer. Mg(2+) is required as a cofactor.

It localises to the plastid. It is found in the chloroplast thylakoid lumen. It catalyses the reaction a 2'-deoxyribonucleoside 5'-diphosphate + ATP = a 2'-deoxyribonucleoside 5'-triphosphate + ADP. The enzyme catalyses a ribonucleoside 5'-diphosphate + ATP = a ribonucleoside 5'-triphosphate + ADP. Major role in the synthesis of nucleoside triphosphates other than ATP. The ATP gamma phosphate is transferred to the NDP beta phosphate via a ping-pong mechanism, using a phosphorylated active-site intermediate. Shows the highest specificity towards GDP. The chain is Nucleoside diphosphate kinase 3 from Spinacia oleracea (Spinach).